The chain runs to 274 residues: Large ribosomal subunit protein uL2 (274 aa).

2 disordered regions span residues 28–54 and 221–274; these read KPYA…TRHI and RGTA…RTKK. A compositionally biased stretch (polar residues) spans 39 to 49; that stretch reads KTGGRNNNGRI.

Belongs to the universal ribosomal protein uL2 family. As to quaternary structure, part of the 50S ribosomal subunit. Forms a bridge to the 30S subunit in the 70S ribosome.

Functionally, one of the primary rRNA binding proteins. Required for association of the 30S and 50S subunits to form the 70S ribosome, for tRNA binding and peptide bond formation. It has been suggested to have peptidyltransferase activity; this is somewhat controversial. Makes several contacts with the 16S rRNA in the 70S ribosome. This is Large ribosomal subunit protein uL2 from Photorhabdus laumondii subsp. laumondii (strain DSM 15139 / CIP 105565 / TT01) (Photorhabdus luminescens subsp. laumondii).